Reading from the N-terminus, the 389-residue chain is Elongation factor Tu-3 (389 aa).

Residues 10–203 form the tr-type G domain; it reads KPHLNIGTMG…AVDTYVPMPE (194 aa). A G1 region spans residues 19–26; it reads GHVDHGKT. GTP is bound at residue 19 to 26; sequence GHVDHGKT. Position 26 (Thr-26) interacts with Mg(2+). Residues 60-64 are G2; it reads GITIN. The tract at residues 81–84 is G3; the sequence is DMPG. Residues 81–85 and 136–139 each bind GTP; these read DMPGH and NKAD. The interval 136-139 is G4; sequence NKAD. Positions 173–175 are G5; that stretch reads SGL.

Belongs to the TRAFAC class translation factor GTPase superfamily. Classic translation factor GTPase family. EF-Tu/EF-1A subfamily. As to quaternary structure, monomer.

Its subcellular location is the cytoplasm. It carries out the reaction GTP + H2O = GDP + phosphate + H(+). Its function is as follows. GTP hydrolase that promotes the GTP-dependent binding of aminoacyl-tRNA to the A-site of ribosomes during protein biosynthesis. This Streptomyces ramocissimus protein is Elongation factor Tu-3.